The chain runs to 163 residues: MSDGQKLTHIDASGEAHMVDVGDKAETVRVAVAEGFVKMKPETLALIRDGNAKKGDVIGTARLAGIMAAKQTANLIPLCHPLMLTKVAVDITEDTGLPGLRVEAMVKLSGKTGVEMEALTAVSIACLTIYDMAKAADKGMEIVNIRLLEKSGGKSGDFRRQES.

Substrate is bound by residues 78–80 (LCH) and 116–117 (ME). Aspartate 131 is an active-site residue.

Belongs to the MoaC family. In terms of assembly, homohexamer; trimer of dimers.

It catalyses the reaction (8S)-3',8-cyclo-7,8-dihydroguanosine 5'-triphosphate = cyclic pyranopterin phosphate + diphosphate. It participates in cofactor biosynthesis; molybdopterin biosynthesis. Its function is as follows. Catalyzes the conversion of (8S)-3',8-cyclo-7,8-dihydroguanosine 5'-triphosphate to cyclic pyranopterin monophosphate (cPMP). This chain is Cyclic pyranopterin monophosphate synthase, found in Agrobacterium fabrum (strain C58 / ATCC 33970) (Agrobacterium tumefaciens (strain C58)).